A 201-amino-acid chain; its full sequence is 3-isopropylmalate dehydratase small subunit (201 aa).

The protein belongs to the LeuD family. LeuD type 1 subfamily. In terms of assembly, heterodimer of LeuC and LeuD.

It carries out the reaction (2R,3S)-3-isopropylmalate = (2S)-2-isopropylmalate. It participates in amino-acid biosynthesis; L-leucine biosynthesis; L-leucine from 3-methyl-2-oxobutanoate: step 2/4. Its function is as follows. Catalyzes the isomerization between 2-isopropylmalate and 3-isopropylmalate, via the formation of 2-isopropylmaleate. This is 3-isopropylmalate dehydratase small subunit from Roseobacter denitrificans (strain ATCC 33942 / OCh 114) (Erythrobacter sp. (strain OCh 114)).